Consider the following 288-residue polypeptide: Bifunctional protein FolD (288 aa).

NADP(+)-binding positions include 166-168 (GAS) and Ile232.

This sequence belongs to the tetrahydrofolate dehydrogenase/cyclohydrolase family. Homodimer.

It carries out the reaction (6R)-5,10-methylene-5,6,7,8-tetrahydrofolate + NADP(+) = (6R)-5,10-methenyltetrahydrofolate + NADPH. The catalysed reaction is (6R)-5,10-methenyltetrahydrofolate + H2O = (6R)-10-formyltetrahydrofolate + H(+). It participates in one-carbon metabolism; tetrahydrofolate interconversion. Catalyzes the oxidation of 5,10-methylenetetrahydrofolate to 5,10-methenyltetrahydrofolate and then the hydrolysis of 5,10-methenyltetrahydrofolate to 10-formyltetrahydrofolate. The sequence is that of Bifunctional protein FolD from Erwinia tasmaniensis (strain DSM 17950 / CFBP 7177 / CIP 109463 / NCPPB 4357 / Et1/99).